Consider the following 205-residue polypeptide: Outer-membrane lipoprotein LolB (205 aa).

Residues 1-17 form the signal peptide; it reads MRLRLFLAASALALLSG. Cysteine 18 carries the N-palmitoyl cysteine lipid modification. Cysteine 18 is lipidated: S-diacylglycerol cysteine.

It belongs to the LolB family. As to quaternary structure, monomer.

It localises to the cell outer membrane. Plays a critical role in the incorporation of lipoproteins in the outer membrane after they are released by the LolA protein. The sequence is that of Outer-membrane lipoprotein LolB from Pseudomonas aeruginosa (strain LESB58).